We begin with the raw amino-acid sequence, 63 residues long: MPQLDTSTWLLTILSMLLTLFVLFQLKISKHSYSPNPKLVPTKTQKQQTPWNITWTKIYLPLL.

The chain crosses the membrane as a helical span at residues 8–24 (TWLLTILSMLLTLFVLF). At Lys57 the chain carries N6-acetyllysine.

It belongs to the ATPase protein 8 family. In terms of assembly, component of the ATP synthase complex composed at least of ATP5F1A/subunit alpha, ATP5F1B/subunit beta, ATP5MC1/subunit c (homooctomer), MT-ATP6/subunit a, MT-ATP8/subunit 8, ATP5ME/subunit e, ATP5MF/subunit f, ATP5MG/subunit g, ATP5MK/subunit k, ATP5MJ/subunit j, ATP5F1C/subunit gamma, ATP5F1D/subunit delta, ATP5F1E/subunit epsilon, ATP5PF/subunit F6, ATP5PB/subunit b, ATP5PD/subunit d, ATP5PO/subunit OSCP. ATP synthase complex consists of a soluble F(1) head domain (subunits alpha(3) and beta(3)) - the catalytic core - and a membrane F(0) domain - the membrane proton channel (subunits c, a, 8, e, f, g, k and j). These two domains are linked by a central stalk (subunits gamma, delta, and epsilon) rotating inside the F1 region and a stationary peripheral stalk (subunits F6, b, d, and OSCP). Interacts with PRICKLE3.

Its subcellular location is the mitochondrion membrane. Its function is as follows. Subunit 8, of the mitochondrial membrane ATP synthase complex (F(1)F(0) ATP synthase or Complex V) that produces ATP from ADP in the presence of a proton gradient across the membrane which is generated by electron transport complexes of the respiratory chain. ATP synthase complex consist of a soluble F(1) head domain - the catalytic core - and a membrane F(1) domain - the membrane proton channel. These two domains are linked by a central stalk rotating inside the F(1) region and a stationary peripheral stalk. During catalysis, ATP synthesis in the catalytic domain of F(1) is coupled via a rotary mechanism of the central stalk subunits to proton translocation. In vivo, can only synthesize ATP although its ATP hydrolase activity can be activated artificially in vitro. Part of the complex F(0) domain. The protein is ATP synthase F(0) complex subunit 8 of Balaenoptera musculus (Blue whale).